The chain runs to 312 residues: Glyoxylate/hydroxypyruvate reductase A (312 aa).

The active site involves arginine 227. Residue histidine 275 is the Proton donor of the active site.

The protein belongs to the D-isomer specific 2-hydroxyacid dehydrogenase family. GhrA subfamily.

It localises to the cytoplasm. It carries out the reaction glycolate + NADP(+) = glyoxylate + NADPH + H(+). The enzyme catalyses (R)-glycerate + NAD(+) = 3-hydroxypyruvate + NADH + H(+). It catalyses the reaction (R)-glycerate + NADP(+) = 3-hydroxypyruvate + NADPH + H(+). In terms of biological role, catalyzes the NADPH-dependent reduction of glyoxylate and hydroxypyruvate into glycolate and glycerate, respectively. The chain is Glyoxylate/hydroxypyruvate reductase A from Salmonella dublin (strain CT_02021853).